Here is a 179-residue protein sequence, read N- to C-terminus: ATP synthase subunit delta 2 (179 aa).

This sequence belongs to the ATPase delta chain family. In terms of assembly, F-type ATPases have 2 components, F(1) - the catalytic core - and F(0) - the membrane proton channel. F(1) has five subunits: alpha(3), beta(3), gamma(1), delta(1), epsilon(1). F(0) has three main subunits: a(1), b(2) and c(10-14). The alpha and beta chains form an alternating ring which encloses part of the gamma chain. F(1) is attached to F(0) by a central stalk formed by the gamma and epsilon chains, while a peripheral stalk is formed by the delta and b chains.

It localises to the cell inner membrane. F(1)F(0) ATP synthase produces ATP from ADP in the presence of a proton or sodium gradient. F-type ATPases consist of two structural domains, F(1) containing the extramembraneous catalytic core and F(0) containing the membrane proton channel, linked together by a central stalk and a peripheral stalk. During catalysis, ATP synthesis in the catalytic domain of F(1) is coupled via a rotary mechanism of the central stalk subunits to proton translocation. Functionally, this protein is part of the stalk that links CF(0) to CF(1). It either transmits conformational changes from CF(0) to CF(1) or is implicated in proton conduction. The chain is ATP synthase subunit delta 2 from Syntrophotalea carbinolica (strain DSM 2380 / NBRC 103641 / GraBd1) (Pelobacter carbinolicus).